Consider the following 251-residue polypeptide: Hydroxyacylglutathione hydrolase (251 aa).

Positions 53, 55, 57, 58, 110, 127, and 165 each coordinate Zn(2+).

The protein belongs to the metallo-beta-lactamase superfamily. Glyoxalase II family. Monomer. Zn(2+) serves as cofactor.

The enzyme catalyses an S-(2-hydroxyacyl)glutathione + H2O = a 2-hydroxy carboxylate + glutathione + H(+). The protein operates within secondary metabolite metabolism; methylglyoxal degradation; (R)-lactate from methylglyoxal: step 2/2. Functionally, thiolesterase that catalyzes the hydrolysis of S-D-lactoyl-glutathione to form glutathione and D-lactic acid. The chain is Hydroxyacylglutathione hydrolase from Cronobacter sakazakii (strain ATCC BAA-894) (Enterobacter sakazakii).